A 128-amino-acid polypeptide reads, in one-letter code: Large ribosomal subunit protein eL8 (128 aa).

Belongs to the eukaryotic ribosomal protein eL8 family. As to quaternary structure, part of the 50S ribosomal subunit. Probably part of the RNase P complex.

The protein localises to the cytoplasm. Functionally, multifunctional RNA-binding protein that recognizes the K-turn motif in ribosomal RNA, the RNA component of RNase P, box H/ACA, box C/D and box C'/D' sRNAs. This Nitrosopumilus maritimus (strain SCM1) protein is Large ribosomal subunit protein eL8.